The following is a 91-amino-acid chain: Signal peptidase complex subunit 1 (91 aa).

The Cytoplasmic portion of the chain corresponds to 1–28 (MEIFNDLSRKLVFPIDYPSQRRVAKLTD). Residues 29-48 (IILGSGTLVSCLLGFYAGSL) traverse the membrane as a helical segment. Residues 49–51 (SLT) are Lumenal-facing. A helical transmembrane segment spans residues 52 to 71 (LYAFAAAYGLALLLVVPAYG). Topologically, residues 72-91 (KYRQQKLAWVGSAAATTKDL) are cytoplasmic.

The protein belongs to the SPCS1 family. In terms of assembly, component of the signal peptidase complex (SPC) composed of a catalytic subunit SEC11 and three accessory subunits SPC1, SPC2 and SPC3. The complex induces a local thinning of the ER membrane which is used to measure the length of the signal peptide (SP) h-region of protein substrates. This ensures the selectivity of the complex towards h-regions shorter than 18-20 amino acids. SPC associates with the translocon complex.

The protein localises to the endoplasmic reticulum membrane. In terms of biological role, component of the signal peptidase complex (SPC) which catalyzes the cleavage of N-terminal signal sequences from nascent proteins as they are translocated into the lumen of the endoplasmic reticulum. Dispensable for SPC enzymatic activity. This is Signal peptidase complex subunit 1 (SPC1) from Eremothecium gossypii (strain ATCC 10895 / CBS 109.51 / FGSC 9923 / NRRL Y-1056) (Yeast).